We begin with the raw amino-acid sequence, 284 residues long: Type II methyltransferase M1.DpnII (284 aa).

7 residues coordinate S-adenosyl-L-methionine: Trp-17, Lys-21, Gly-46, Asp-62, Asp-177, Phe-178, and Asp-194.

It belongs to the N(4)/N(6)-methyltransferase family. Monomer. Homodimer.

It carries out the reaction a 2'-deoxyadenosine in DNA + S-adenosyl-L-methionine = an N(6)-methyl-2'-deoxyadenosine in DNA + S-adenosyl-L-homocysteine + H(+). Its function is as follows. An alpha subtype methylase that recognizes the double-stranded sequence 5'-GATC-3', methylates A-2 on both strands, and protects the DNA from cleavage by the DpnII endonuclease. The sequence is that of Type II methyltransferase M1.DpnII from Streptococcus pneumoniae.